We begin with the raw amino-acid sequence, 3371 residues long: Protocadherin-23 (3371 aa).

Positions 1 to 40 (MSPCGRKMGEGRQQRRAPVGKLLLLPGRRDTPHGRSGSSG) are disordered. Topologically, residues 1 to 46 (MSPCGRKMGEGRQQRRAPVGKLLLLPGRRDTPHGRSGSSGARTQRS) are cytoplasmic. A helical membrane pass occupies residues 47–67 (LLWLLVHVWLWAASGSSAQLF). 27 Cadherin domains span residues 65–167 (QLFN…SPRF), 168–296 (PLDS…PPVF), 297–413 (EQDE…RPAI), 424–539 (ARVS…PPLF), 540–663 (SQQH…EPIF), 664–771 (WRQV…HPVF), 772–881 (NPST…RPKY), 877–979 (ERPK…HPAF), 980–1082 (LRTS…SPSW), 1085–1191 (EHLV…SPTF), 1192–1294 (LHDV…RPFF), 1299–1415 (PGKE…IPEN), 1404–1510 (SQNI…SPSF), 1511–1620 (QDEL…NPTF), 1620–1724 (FISF…APVF), 1725–1829 (KQHL…APEF), 1830–1933 (IVSS…SPSF), 1934–2038 (PTLY…DPVL), 2039–2130 (EQNP…VIHM), 2140–2242 (SHHL…SPCF), 2243–2347 (EQSI…APAF), 2347–2447 (FLPS…PPVF), 2448–2549 (SQDF…APEF), 2550–2665 (TVKS…PPNF), 2666–2769 (SSLS…APQF), 2770–2880 (MFSS…EPIF), and 2881–2988 (TQDQ…TPLA). Over 68–2986 (NLTLSVDEGL…NVSFSSEGTP (2919 aa)) the chain is Extracellular. N-linked (GlcNAc...) asparagine glycosylation is found at asparagine 669, asparagine 772, asparagine 814, asparagine 905, asparagine 966, asparagine 1038, asparagine 1172, and asparagine 1275. 4 N-linked (GlcNAc...) asparagine glycosylation sites follow: asparagine 1487, asparagine 1595, asparagine 1617, and asparagine 1664. The N-linked (GlcNAc...) asparagine glycan is linked to asparagine 1898. N-linked (GlcNAc...) asparagine glycosylation is found at asparagine 2054, asparagine 2070, and asparagine 2098. N-linked (GlcNAc...) asparagine glycosylation occurs at asparagine 2329. Asparagine 2479, asparagine 2497, asparagine 2555, and asparagine 2664 each carry an N-linked (GlcNAc...) asparagine glycan. N-linked (GlcNAc...) asparagine glycosylation is found at asparagine 2929 and asparagine 2977. The helical transmembrane segment at 2987–3017 (LAVFASSFSISLVVSFLVFLILICILIVMIL) threads the bilayer. Over 3018–3371 (RHKQKDTINN…ELKAEDEVQI (354 aa)) the chain is Cytoplasmic. The span at 3117–3140 (KCSDSALSDHESRVPDSGIPRDSD) shows a compositional bias: basic and acidic residues. The tract at residues 3117-3141 (KCSDSALSDHESRVPDSGIPRDSDQ) is disordered.

Cerebral cortex and testis.

It localises to the membrane. Functionally, calcium-dependent cell-adhesion protein. The chain is Protocadherin-23 (DCHS2) from Homo sapiens (Human).